The following is a 289-amino-acid chain: Glycine--tRNA ligase alpha subunit (289 aa).

This sequence belongs to the class-II aminoacyl-tRNA synthetase family. As to quaternary structure, tetramer of two alpha and two beta subunits.

It is found in the cytoplasm. The catalysed reaction is tRNA(Gly) + glycine + ATP = glycyl-tRNA(Gly) + AMP + diphosphate. The polypeptide is Glycine--tRNA ligase alpha subunit (Prochlorococcus marinus subsp. pastoris (strain CCMP1986 / NIES-2087 / MED4)).